The sequence spans 96 residues: UPF0235 protein MK0273 (96 aa).

This sequence belongs to the UPF0235 family.

The chain is UPF0235 protein MK0273 from Methanopyrus kandleri (strain AV19 / DSM 6324 / JCM 9639 / NBRC 100938).